The following is a 129-amino-acid chain: Glycine cleavage system H protein (129 aa).

Positions 24 to 106 constitute a Lipoyl-binding domain; the sequence is LIRVGISAFA…HGAGWLLVVR (83 aa). Lys-65 carries the N6-lipoyllysine modification.

This sequence belongs to the GcvH family. As to quaternary structure, the glycine cleavage system is composed of four proteins: P, T, L and H. Requires (R)-lipoate as cofactor.

Functionally, the glycine cleavage system catalyzes the degradation of glycine. The H protein shuttles the methylamine group of glycine from the P protein to the T protein. The protein is Glycine cleavage system H protein of Synechococcus sp. (strain CC9902).